Consider the following 422-residue polypeptide: Serine--tRNA ligase (422 aa).

226–228 (TSE) provides a ligand contact to L-serine. ATP is bound by residues 257–259 (RRE) and valine 273. Glutamate 280 is an L-serine binding site. 344–347 (ELTS) is an ATP binding site. Threonine 379 provides a ligand contact to L-serine.

It belongs to the class-II aminoacyl-tRNA synthetase family. Type-1 seryl-tRNA synthetase subfamily. In terms of assembly, homodimer. The tRNA molecule binds across the dimer.

Its subcellular location is the cytoplasm. The enzyme catalyses tRNA(Ser) + L-serine + ATP = L-seryl-tRNA(Ser) + AMP + diphosphate + H(+). It carries out the reaction tRNA(Sec) + L-serine + ATP = L-seryl-tRNA(Sec) + AMP + diphosphate + H(+). It participates in aminoacyl-tRNA biosynthesis; selenocysteinyl-tRNA(Sec) biosynthesis; L-seryl-tRNA(Sec) from L-serine and tRNA(Sec): step 1/1. Its function is as follows. Catalyzes the attachment of serine to tRNA(Ser). Is also able to aminoacylate tRNA(Sec) with serine, to form the misacylated tRNA L-seryl-tRNA(Sec), which will be further converted into selenocysteinyl-tRNA(Sec). The chain is Serine--tRNA ligase from Corynebacterium glutamicum (strain ATCC 13032 / DSM 20300 / JCM 1318 / BCRC 11384 / CCUG 27702 / LMG 3730 / NBRC 12168 / NCIMB 10025 / NRRL B-2784 / 534).